We begin with the raw amino-acid sequence, 478 residues long: MASSDLEAATALKVQGNKAFGQHEWPTAVDFYTQAIAKYDREPSFFSNRAQAHIKLEAYGFAIADATKALELDPAYTKAYWRRALANTAILNYKDALRDFKVVAKREPNNRDAKVKLADCEKLVRRMEFEKAIEVGDPPSAFEDLDIDAIAVDDSYDGVRLEKEMTQEFIDDMIERFKNGKKIHRKYAFQIVKAVKDIVYAEPTMVEIGVDQGTKLTVCGDTHGQFFDLLEIFRLNGYPSEKHAYLFNGDFVDRGSWSTEIALLLYAYKWLRPNGIFLNRGNHETDDMNKVYGFEGECKAKYNERMFKVFSESFSALPLATLIGNKYLVLHGGLFSDDNTSLDDIRKLDRHNQRQPGQQGLMMEMLWTDPQTEPGRGPSKRGVGLQFGPDVTKRFCEKNGLEAIIRSHEVRMEGYEVEHDGRCITVFSAPKYCDTTENKGAFINVGPELKLDFQVFEAVPHPDIKPMAYAQNSIMSMM.

TPR repeat units follow at residues 9-42, 43-76, and 78-110; these read ATALKVQGNKAFGQHEWPTAVDFYTQAIAKYDRE, PSFFSNRAQAHIKLEAYGFAIADATKALELDPAY, and KAYWRRALANTAILNYKDALRDFKVVAKREPNN. The segment at 151 to 463 is catalytic; that stretch reads AVDDSYDGVR…QVFEAVPHPD (313 aa). Residues aspartate 221, histidine 223, aspartate 250, and asparagine 282 each coordinate Mn(2+). Histidine 283 (proton donor/acceptor) is an active-site residue. The Mn(2+) site is built by histidine 331 and histidine 408.

The protein belongs to the PPP phosphatase family. PP-5 (PP-T) subfamily. Mg(2+) is required as a cofactor. Requires Mn(2+) as cofactor.

It is found in the nucleus. It catalyses the reaction O-phospho-L-seryl-[protein] + H2O = L-seryl-[protein] + phosphate. It carries out the reaction O-phospho-L-threonyl-[protein] + H2O = L-threonyl-[protein] + phosphate. Functionally, protein phosphatase that specifically binds to and dephosphorylates the molecular chaperone Hsp90. Dephosphorylation positively regulates the Hsp90 chaperone machinery. The polypeptide is Serine/threonine-protein phosphatase T (Aspergillus oryzae (strain ATCC 42149 / RIB 40) (Yellow koji mold)).